The chain runs to 434 residues: Ribitol-5-phosphate xylosyltransferase 1 (434 aa).

At 1–7 (MRFFRRK) the chain is on the cytoplasmic side. The helical; Signal-anchor for type II membrane protein transmembrane segment at 8-28 (IAIIVILAYAIFSLYAAYNVF) threads the bilayer. The Extracellular portion of the chain corresponds to 29–434 (FSKRVISRVH…VLEENFFKIT (406 aa)).

The protein belongs to the TMEM5 family.

It is found in the golgi apparatus membrane. The enzyme catalyses 3-O-[Rib-ol-P-Rib-ol-P-3-beta-D-GalNAc-(1-&gt;3)-beta-D-GlcNAc-(1-&gt;4)-(O-6-P-alpha-D-Man)]-Thr-[protein] + UDP-alpha-D-xylose = 3-O-[beta-D-Xyl-(1-&gt;4)-Rib-ol-P-Rib-ol-P-3-beta-D-GalNAc-(1-&gt;3)-beta-D-GlcNAc-(1-&gt;4)-(O-6-P-alpha-D-Man)]-Thr-[protein] + UDP + H(+). It functions in the pathway protein modification; protein glycosylation. Its function is as follows. Acts as a UDP-D-xylose:ribitol-5-phosphate beta1,4-xylosyltransferase, which catalyzes the transfer of UDP-D-xylose to ribitol 5-phosphate (Rbo5P) to form the Xylbeta1-4Rbo5P linkage on O-mannosyl glycan. Participates in the biosynthesis of the phosphorylated O-mannosyl trisaccharide (N-acetylgalactosamine-beta-3-N-acetylglucosamine-beta-4-(phosphate-6-)mannose), a carbohydrate structure present in alpha-dystroglycan (DAG1), which is required for binding laminin G-like domain-containing extracellular proteins with high affinity. The polypeptide is Ribitol-5-phosphate xylosyltransferase 1 (rxylt1) (Danio rerio (Zebrafish)).